The chain runs to 566 residues: Cytoplasmic polyadenylation element-binding protein 2 (566 aa).

Disordered stretches follow at residues 17-46 and 64-98; these read FWGNGDQLEGKTLSSIKQQESKKMDDSVEG and LERLHEKEEQECEEERLDWSEKVDSEEEEEDIQEQ. Over residues 87 to 98 the composition is skewed to acidic residues; it reads DSEEEEEDIQEQ. The RRM domain maps to 430–512; that stretch reads MVAFIGGVPR…KRVEIKPYFF (83 aa).

In terms of biological role, cytoplasmic polyadenylation element binding protein that binds to and regulates the translation of specific mRNAs. This is Cytoplasmic polyadenylation element-binding protein 2 (cpb-2) from Caenorhabditis briggsae.